Reading from the N-terminus, the 180-residue chain is Ribulose bisphosphate carboxylase small subunit, chloroplastic (180 aa).

The N-terminal 56 residues, 1–56, are a transit peptide targeting the chloroplast; the sequence is MASSIMSSAAVATRSNGAQASMVAPFTGLKSNASFPVSRKTNLDITSIASNGGRVR.

It belongs to the RuBisCO small chain family. Heterohexadecamer of 8 large and 8 small subunits.

Its subcellular location is the plastid. The protein localises to the chloroplast. In terms of biological role, ruBisCO catalyzes two reactions: the carboxylation of D-ribulose 1,5-bisphosphate, the primary event in carbon dioxide fixation, as well as the oxidative fragmentation of the pentose substrate. Both reactions occur simultaneously and in competition at the same active site. Although the small subunit is not catalytic it is essential for maximal activity. In Stellaria longipes (Longstalk starwort), this protein is Ribulose bisphosphate carboxylase small subunit, chloroplastic.